Consider the following 1292-residue polypeptide: MPTYNDDDDSSRPPSVHSERNQKPSSSQFLGVPSSNYNQRENSSRSGSSTISREPSSSGTMYPMASRDSMKESYDKNKGTPPDYTSYVSHSDAEPEQASSKSSTSIEDLLHTEYDDAPFAFSIPLLQRLQDPKNTSLLHAIHGLKGLCKGLKVDPSTGISTHEPHYADKLQMSDILNDDSNPKLVVHLDRIRSQDNNPEAKVSHDSDRVKYYGKNVLPEHDSKGLIRLMLEAFKDKVLILLSIAAVVSLALGLYQTFGQPPTLDPITGKPEPRVEWVEGVAIMAAIVIVVTVGGVNDWQKELQFKKLNAKVSNFDVQVLRDGAVHSTSVFDLVVGDVLFVEAGDVVPVDGVLIESNNLVLDESAMTGETDNIKKVDANTAIERTSPDVEYRKNADPYLISGTTILEGNGKLLVTAVGVNSFNGRTTMAMRTEGQATPLQLRLSRVADAIAKLGGAASALLFIVLLIEFLVRLKSNDSSSKNKGQEFLQILIVSVTLLVVAVPEGLPLAVTLALAFATNRMQKDNNLVRHLQACETMGTATNICSDKTGTLTQNRMTVVAGGFGTDVLFFDHNDETPTNVDQGSDSSKFEDAGASAFAFKRLSPELRDLTLYSIAVNSTCRQLFEDNSDTPRFIGSKTETALLDMSVKELGLTNVDSMRSSVDIKQFFSFSSDRKASGAIFEYKDKYYFVVKGMPERVLQQSTSVITNGSLDEVEDMHSHADYFKEMITGYAKRSLRTLGLCYRVFDSWPPKDIPTNDEDSSNPLKWEDAFTDMTFLGFFGIMDPIRPDVPLAVKVCQGAGVTVRMVTGDNIVTAKAIASQCGIYTEDGISMEGPEFRSLSDEKRLEILPKLDVLARSSPLDKQLLIEGLQKLGNVVAVTGDGTNDAPALKKANVGFSMGKSGTEVAKEASDIILMDDNFSSIVKAIAWGRTVNDAVKKFLQFQITVNITAVFLTIISAVASTDQSSVLTAVQLLWVNLIMDTLAALALATDPPTPEVLKRKPEKPGASLFTFDMWKMIICQSMYQLAVTLVLHFAGNSIFHYPSNTADMNTIVFNTFVWLQLFNEINNRRLDNKLNIFERINHNFLFIAIFVIVAGIQVIIVFFGGAAFSVKRIDGKGWAISIVFGVISIPLGALIRCVPNNFLRKVLPVKTIDTVFSWILNPRFRSKRRSTDHDVESLSLIPYEPTSPNEVIDSIRHSLGFVQRIRGGRIRHLLNNSKFDKQMEALPERLRPRVKQRFMKIRSPSVSSATSVALMIPISTLVSEASGRLGGHDIWISHNRQALDKKSSNVH.

Residues 1 to 105 are disordered; it reads MPTYNDDDDS…EQASSKSSTS (105 aa). Over 1–236 the chain is Cytoplasmic; sequence MPTYNDDDDS…RLMLEAFKDK (236 aa). Polar residues predominate over residues 23–41; the sequence is KPSSSQFLGVPSSNYNQRE. Low complexity predominate over residues 44–60; sequence SRSGSSTISREPSSSGT. Positions 68–78 are enriched in basic and acidic residues; that stretch reads DSMKESYDKNK. A helical membrane pass occupies residues 237–257; sequence VLILLSIAAVVSLALGLYQTF. Topologically, residues 258–273 are vacuolar; the sequence is GQPPTLDPITGKPEPR. The helical transmembrane segment at 274–294 threads the bilayer; the sequence is VEWVEGVAIMAAIVIVVTVGG. Over 295–448 the chain is Cytoplasmic; the sequence is VNDWQKELQF…QLRLSRVADA (154 aa). The helical transmembrane segment at 449–469 threads the bilayer; sequence IAKLGGAASALLFIVLLIEFL. The Vacuolar segment spans residues 470 to 488; it reads VRLKSNDSSSKNKGQEFLQ. A helical membrane pass occupies residues 489–509; sequence ILIVSVTLLVVAVPEGLPLAV. Valine 498 and glutamate 503 together coordinate Ca(2+). Topologically, residues 510–938 are cytoplasmic; that stretch reads TLALAFATNR…GRTVNDAVKK (429 aa). Aspartate 545 functions as the 4-aspartylphosphate intermediate in the catalytic mechanism. Mg(2+) contacts are provided by aspartate 545 and threonine 547. Residues threonine 547, glutamate 638, lysine 691, arginine 736, 807–809, arginine 856, and lysine 862 each bind ATP; that span reads TGD. A Mg(2+)-binding site is contributed by aspartate 881. Asparagine 884 is an ATP binding site. Residues 939 to 959 traverse the membrane as a helical segment; that stretch reads FLQFQITVNITAVFLTIISAV. Asparagine 947 contributes to the Ca(2+) binding site. Over 960 to 966 the chain is Vacuolar; it reads ASTDQSS. The helical transmembrane segment at 967 to 987 threads the bilayer; it reads VLTAVQLLWVNLIMDTLAALA. 2 residues coordinate Ca(2+): asparagine 977 and aspartate 981. At 988–1016 the chain is on the cytoplasmic side; it reads LATDPPTPEVLKRKPEKPGASLFTFDMWK. A helical transmembrane segment spans residues 1017 to 1037; sequence MIICQSMYQLAVTLVLHFAGN. Over 1038 to 1084 the chain is Vacuolar; it reads SIFHYPSNTADMNTIVFNTFVWLQLFNEINNRRLDNKLNIFERINHN. Residues 1085–1105 form a helical membrane-spanning segment; it reads FLFIAIFVIVAGIQVIIVFFG. Topologically, residues 1106–1115 are cytoplasmic; it reads GAAFSVKRID. A helical membrane pass occupies residues 1116–1136; the sequence is GKGWAISIVFGVISIPLGALI. The Vacuolar portion of the chain corresponds to 1137 to 1292; sequence RCVPNNFLRK…ALDKKSSNVH (156 aa).

This sequence belongs to the cation transport ATPase (P-type) (TC 3.A.3) family.

The protein resides in the vacuole membrane. The catalysed reaction is Ca(2+)(in) + ATP + H2O = Ca(2+)(out) + ADP + phosphate + H(+). In terms of biological role, this magnesium-dependent enzyme catalyzes the hydrolysis of ATP coupled with the transport of calcium. Transports the calcium to the vacuole and participates in the control of the cytosolic free calcium. This is Calcium-transporting ATPase 2 (pmc1) from Schizosaccharomyces pombe (strain 972 / ATCC 24843) (Fission yeast).